A 64-amino-acid chain; its full sequence is U-scoloptoxin(14)-Er1a (64 aa).

The signal sequence occupies residues 1–23 (MRPSFPLLLIMLLVCTAHHMVSG).

The protein belongs to the scoloptoxin-14 family. Post-translationally, contains 4 disulfide bonds. As to expression, expressed by the venom gland.

Its subcellular location is the secreted. This Ethmostigmus rubripes (Giant centipede) protein is U-scoloptoxin(14)-Er1a.